A 172-amino-acid chain; its full sequence is MLKVLGIDPGSRFTGYGVVEWGGGKPRYVASGCIRVTGETLAERLRCIYLGVTQVVSMYAPDEAAIEQVFMARNADSALKLGQARGVAILAMAEQGLQVAEYSAKKVKQSVVGKGNAEKWQVQHMMQAMLDLQAKPQADAADALAIAVCHLHTQQSLMRIGSVSSSRRGRMR.

Active-site residues include D8, E67, and D139. 3 residues coordinate Mg(2+): D8, E67, and D139.

It belongs to the RuvC family. In terms of assembly, homodimer which binds Holliday junction (HJ) DNA. The HJ becomes 2-fold symmetrical on binding to RuvC with unstacked arms; it has a different conformation from HJ DNA in complex with RuvA. In the full resolvosome a probable DNA-RuvA(4)-RuvB(12)-RuvC(2) complex forms which resolves the HJ. Mg(2+) serves as cofactor.

Its subcellular location is the cytoplasm. The enzyme catalyses Endonucleolytic cleavage at a junction such as a reciprocal single-stranded crossover between two homologous DNA duplexes (Holliday junction).. Functionally, the RuvA-RuvB-RuvC complex processes Holliday junction (HJ) DNA during genetic recombination and DNA repair. Endonuclease that resolves HJ intermediates. Cleaves cruciform DNA by making single-stranded nicks across the HJ at symmetrical positions within the homologous arms, yielding a 5'-phosphate and a 3'-hydroxyl group; requires a central core of homology in the junction. The consensus cleavage sequence is 5'-(A/T)TT(C/G)-3'. Cleavage occurs on the 3'-side of the TT dinucleotide at the point of strand exchange. HJ branch migration catalyzed by RuvA-RuvB allows RuvC to scan DNA until it finds its consensus sequence, where it cleaves and resolves the cruciform DNA. This chain is Crossover junction endodeoxyribonuclease RuvC, found in Hahella chejuensis (strain KCTC 2396).